Consider the following 203-residue polypeptide: Peptidyl-tRNA hydrolase (203 aa).

Position 16 (Tyr-16) interacts with tRNA. His-21 serves as the catalytic Proton acceptor. The tRNA site is built by Tyr-68, Asn-70, and Asn-116.

This sequence belongs to the PTH family. Monomer.

The protein resides in the cytoplasm. It carries out the reaction an N-acyl-L-alpha-aminoacyl-tRNA + H2O = an N-acyl-L-amino acid + a tRNA + H(+). Functionally, hydrolyzes ribosome-free peptidyl-tRNAs (with 1 or more amino acids incorporated), which drop off the ribosome during protein synthesis, or as a result of ribosome stalling. Catalyzes the release of premature peptidyl moieties from peptidyl-tRNA molecules trapped in stalled 50S ribosomal subunits, and thus maintains levels of free tRNAs and 50S ribosomes. The polypeptide is Peptidyl-tRNA hydrolase (Nostoc sp. (strain PCC 7120 / SAG 25.82 / UTEX 2576)).